Here is a 581-residue protein sequence, read N- to C-terminus: ATP-dependent lipid A-core flippase (581 aa).

5 consecutive transmembrane segments (helical) span residues 27-47 (VFLA…FPAI), 63-83 (MVWL…VIVY), 154-174 (IALI…TLAI), 251-271 (MTPI…FLAL), and 279-299 (GASA…ISPV). Residues 28 to 311 (FLAVIGMVGT…LATVNPTIQR (284 aa)) form the ABC transmembrane type-1 domain. An ABC transporter domain is found at 343–579 (ICFDNVSLRY…GSYYANLSRL (237 aa)). Residue 377 to 384 (GASGGGKS) coordinates ATP.

The protein belongs to the ABC transporter superfamily. Lipid exporter (TC 3.A.1.106) family. Homodimer.

The protein resides in the cell inner membrane. It catalyses the reaction ATP + H2O + lipid A-core oligosaccharideSide 1 = ADP + phosphate + lipid A-core oligosaccharideSide 2.. Functionally, involved in lipopolysaccharide (LPS) biosynthesis. Translocates lipid A-core from the inner to the outer leaflet of the inner membrane. Transmembrane domains (TMD) form a pore in the inner membrane and the ATP-binding domain (NBD) is responsible for energy generation. This Albidiferax ferrireducens (strain ATCC BAA-621 / DSM 15236 / T118) (Rhodoferax ferrireducens) protein is ATP-dependent lipid A-core flippase.